A 378-amino-acid chain; its full sequence is Cytochrome b (378 aa).

The next 4 membrane-spanning stretches (helical) occupy residues 34–54 (FGSL…FLAM), 78–99 (WLLR…YLHV), 114–134 (WLVG…GYVL), and 179–199 (FFTF…IHIL). Heme b-binding residues include His84 and His98. Positions 183 and 197 each coordinate heme b. His202 provides a ligand contact to a ubiquinone. The next 4 helical transmembrane spans lie at 227–247 (FKDI…VLIN), 289–309 (LGGV…PFYH), 321–341 (INQI…WIGA), and 348–368 (YVLV…FNPL).

The protein belongs to the cytochrome b family. As to quaternary structure, the main subunits of complex b-c1 are: cytochrome b, cytochrome c1 and the Rieske protein. Heme b is required as a cofactor.

Its subcellular location is the mitochondrion inner membrane. Functionally, component of the ubiquinol-cytochrome c reductase complex (complex III or cytochrome b-c1 complex) that is part of the mitochondrial respiratory chain. The b-c1 complex mediates electron transfer from ubiquinol to cytochrome c. Contributes to the generation of a proton gradient across the mitochondrial membrane that is then used for ATP synthesis. This is Cytochrome b (MT-CYB) from Cochliomyia hominivorax (Primary screw-worm).